Consider the following 174-residue polypeptide: uncharacterized protein (174 aa).

The region spanning 42–174 (SNTKNINLYE…GVKGMFWYPR (133 aa)) is the N-acetyltransferase domain.

The protein belongs to the acetyltransferase family. Ycf52 subfamily.

The protein resides in the plastid. It is found in the chloroplast. This is an uncharacterized protein from Porphyra purpurea (Red seaweed).